The following is a 367-amino-acid chain: MEANGLGPQGFPELKNDTFLRAAWGEETDYTPVWCMRQAGRYLPEFRETRAAQDFFSTCRSPEACCEPTLQPLRRFPLDAAIIFSDILVVPQALGMEVTMVPGKGPSFPEPLREEQDLECLRDPEVVASELDYVFQAITLTRQRLAGRVPLIGFAGAPWTLMTYMVEGGGSSTMAQAKRWLYQRPQASHQLLRILTDALVPYLVGQVAAGAQALQLFESHAGHLGPQLFSKFALPYIRDVAKQVKARLREAGLAPVPMIIFAKDGHFALEELAQAGYEVVGLDWTVAPKKARECVGKTVTLQGNLDPCALYASEEEIGQLVKQMLDDFGPHRYIANLGHGLYPDMDPEHVGAFVDAVHKHSRLLRQN.

Methionine 1 is subject to N-acetylmethionine. Arginine 37, alanine 39, arginine 41, arginine 50, aspartate 86, tyrosine 164, serine 219, and histidine 339 together coordinate coproporphyrinogen I. Coproporphyrinogen III contacts are provided by arginine 37, alanine 39, and arginine 41. Positions 86, 164, 219, and 339 each coordinate coproporphyrinogen III.

It belongs to the uroporphyrinogen decarboxylase family. In terms of assembly, homodimer.

The protein resides in the cytoplasm. It localises to the cytosol. It catalyses the reaction uroporphyrinogen III + 4 H(+) = coproporphyrinogen III + 4 CO2. The enzyme catalyses uroporphyrinogen I + 4 H(+) = coproporphyrinogen I + 4 CO2. It participates in porphyrin-containing compound metabolism; protoporphyrin-IX biosynthesis; coproporphyrinogen-III from 5-aminolevulinate: step 4/4. Functionally, catalyzes the sequential decarboxylation of the four acetate side chains of uroporphyrinogen to form coproporphyrinogen and participates in the fifth step in the heme biosynthetic pathway. Isomer I or isomer III of uroporphyrinogen may serve as substrate, but only coproporphyrinogen III can ultimately be converted to heme. In vitro also decarboxylates pentacarboxylate porphyrinogen I. The chain is Uroporphyrinogen decarboxylase from Pongo abelii (Sumatran orangutan).